Reading from the N-terminus, the 343-residue chain is Fructose-1,6-bisphosphatase class 1 (343 aa).

4 residues coordinate Mg(2+): Glu-99, Asp-121, Leu-123, and Asp-124. Residues 124–127 (DGSS), Asn-218, Tyr-250, and Lys-283 contribute to the substrate site. Position 289 (Glu-289) interacts with Mg(2+).

This sequence belongs to the FBPase class 1 family. As to quaternary structure, homotetramer. Mg(2+) is required as a cofactor.

It localises to the cytoplasm. The enzyme catalyses beta-D-fructose 1,6-bisphosphate + H2O = beta-D-fructose 6-phosphate + phosphate. The protein operates within carbohydrate biosynthesis; gluconeogenesis. The polypeptide is Fructose-1,6-bisphosphatase class 1 (Leptospira biflexa serovar Patoc (strain Patoc 1 / Ames)).